We begin with the raw amino-acid sequence, 1279 residues long: Amylopullulanase (1279 aa).

The N-terminal stretch at 1-35 is a signal peptide; the sequence is MYKKLFTKKFISFVMSLLLVLTAAFSSMPFHNVYA. Residues Asp-248, Asn-250, Asp-288, Asp-343, Asn-401, Asp-403, Asn-406, Asp-407, Gly-452, and Asp-454 each contribute to the Ca(2+) site. 2 residues coordinate substrate: His-527 and Arg-627. Asp-629 (nucleophile) is an active-site residue. Glu-658 functions as the Proton donor in the catalytic mechanism. Substrate contacts are provided by residues 734–735, Asp-794, and Arg-798; that span reads HD. Fibronectin type-III domains are found at residues 930-1022 and 1158-1252; these read APQV…AYPI and KPTA…VVPI.

Belongs to the glycosyl hydrolase 13 family. It depends on Ca(2+) as a cofactor.

It carries out the reaction Endohydrolysis of (1-&gt;4)-alpha-D-glucosidic linkages in polysaccharides containing three or more (1-&gt;4)-alpha-linked D-glucose units.. It catalyses the reaction Hydrolysis of (1-&gt;6)-alpha-D-glucosidic linkages in pullulan, amylopectin and glycogen, and in the alpha- and beta-limit dextrins of amylopectin and glycogen.. The sequence is that of Amylopullulanase (apu) from Thermoanaerobacterium saccharolyticum.